The sequence spans 883 residues: Translation initiation factor IF-2 (883 aa).

A compositionally biased stretch (polar residues) spans 32–45 (NDLNGKNNSNSSIN). Disordered stretches follow at residues 32–216 (NDLN…QNKY) and 251–275 (RKLG…AETE). A compositionally biased stretch (basic and acidic residues) spans 46 to 62 (LDKHNNKVEYSQNRDNR). The segment covering 75–216 (GGYSQNRDNR…VGKNTSQNKY (142 aa)) has biased composition (polar residues). A compositionally biased stretch (basic and acidic residues) spans 251–260 (RKLGEKKKQQ). Residues 381–554 (EKPPVITIMG…DMMLLKANPS (174 aa)) enclose the tr-type G domain. The G1 stretch occupies residues 390-397 (GHVDHGKT). 390 to 397 (GHVDHGKT) is a GTP binding site. Residues 415 to 419 (GITQH) form a G2 region. Residues 436–439 (DTPG) form a G3 region. Residues 436–440 (DTPGH) and 490–493 (NKID) each bind GTP. The G4 stretch occupies residues 490–493 (NKID). Residues 526 to 528 (SAL) form a G5 region.

It belongs to the TRAFAC class translation factor GTPase superfamily. Classic translation factor GTPase family. IF-2 subfamily.

The protein resides in the cytoplasm. Functionally, one of the essential components for the initiation of protein synthesis. Protects formylmethionyl-tRNA from spontaneous hydrolysis and promotes its binding to the 30S ribosomal subunits. Also involved in the hydrolysis of GTP during the formation of the 70S ribosomal complex. This Borrelia garinii subsp. bavariensis (strain ATCC BAA-2496 / DSM 23469 / PBi) (Borreliella bavariensis) protein is Translation initiation factor IF-2.